The chain runs to 1625 residues: Nonribosomal peptide synthetase aclP (1625 aa).

A Carrier 1 domain is found at 47 to 123; that stretch reads TTMNPSSQLL…ALFTDLLSSE (77 aa). Ser-84 carries the post-translational modification O-(pantetheine 4'-phosphoryl)serine. Residues 127–157 form a disordered region; sequence IPIPDPSDDSDDLSNPSSSTGGSPRVATPIS. Positions 286 to 567 are condensation 1; that stretch reads ASSQSTVIWA…KYFQRALQLL (282 aa). Residues 614–997 are adenylation; it reads FESAVSRNPM…GRTDRQIKLR (384 aa). The 76-residue stretch at 1096–1171 folds into the Carrier 2 domain; it reads SPMEKLVGDA…HLAAAIDSGL (76 aa). Ser-1131 bears the O-(pantetheine 4'-phosphoryl)serine mark. Residues 1195–1585 form a condensation 2 region; the sequence is EWWHKYQINE…LQARIPLALS (391 aa).

Belongs to the NRP synthetase family.

It participates in mycotoxin biosynthesis. Nonribosomal peptide synthetase; part of the gene cluster that mediates the biosynthesis of aspirochlorine (or antibiotic A30641), an unusual halogenated spiro compound with distinctive antifungal properties due to selective inhibition of protein biosynthesis, and which is also active against bacteria, viruses, and murine tumor cells. The non-ribosomal peptide synthetase (NRPS) aclP is responsible the formation of the diketopiperazine (DKP) core from the condensation of 2 phenylalanine residues. One Phe residue is tailored into chlorotyrosine by hydroxylation and chlorination, whereas the second Phe undergoes an unprecedented C-C bond cleavage to be converted into glycine. After formation of the DKP, sulfur is incorporated into the DKP by conjugation with glutathione by aclG, followed by its stepwise degradation to the thiol by aclI, aclJ and aclK, and the dithiol oxidation by aclT. In addition, oxygenases (aclB, aclC, aclL and aclO) and O-methyltransferases (aclM and aclU) act as tailoring enzymes to produce the intermediate dechloroaspirochlorine. Ultimately, chlorination of dechloroaspirochlorine by the halogenase aclH is the last step in the aspirochlorine pathway. This Aspergillus oryzae (strain ATCC 42149 / RIB 40) (Yellow koji mold) protein is Nonribosomal peptide synthetase aclP.